Consider the following 146-residue polypeptide: uncharacterized protein (146 aa).

The next 4 membrane-spanning stretches (helical) occupy residues 1–21 (MFAN…AASL), 35–55 (AAVY…LFVG), 87–107 (GGAG…GVGH), and 111–131 (AIAA…GGHL).

Its subcellular location is the cell membrane. This is an uncharacterized protein from Mycobacterium tuberculosis (strain CDC 1551 / Oshkosh).